The chain runs to 329 residues: Ketol-acid reductoisomerase (NADP(+)) (329 aa).

The KARI N-terminal Rossmann domain occupies 2 to 182 (TQLFYDTDAD…GGTRAGILET (181 aa)). Residues 25 to 28 (YGSQ), Ser51, Ser53, and 83 to 86 (DEFQ) each bind NADP(+). His108 is an active-site residue. Gly134 lines the NADP(+) pocket. Positions 183–328 (NFKEETETDL…KGLRAMFSWL (146 aa)) constitute a KARI C-terminal knotted domain. Positions 191, 195, 227, and 231 each coordinate Mg(2+). Ser252 provides a ligand contact to substrate.

It belongs to the ketol-acid reductoisomerase family. Requires Mg(2+) as cofactor.

The enzyme catalyses (2R)-2,3-dihydroxy-3-methylbutanoate + NADP(+) = (2S)-2-acetolactate + NADPH + H(+). The catalysed reaction is (2R,3R)-2,3-dihydroxy-3-methylpentanoate + NADP(+) = (S)-2-ethyl-2-hydroxy-3-oxobutanoate + NADPH + H(+). Its pathway is amino-acid biosynthesis; L-isoleucine biosynthesis; L-isoleucine from 2-oxobutanoate: step 2/4. It functions in the pathway amino-acid biosynthesis; L-valine biosynthesis; L-valine from pyruvate: step 2/4. Its function is as follows. Involved in the biosynthesis of branched-chain amino acids (BCAA). Catalyzes an alkyl-migration followed by a ketol-acid reduction of (S)-2-acetolactate (S2AL) to yield (R)-2,3-dihydroxy-isovalerate. In the isomerase reaction, S2AL is rearranged via a Mg-dependent methyl migration to produce 3-hydroxy-3-methyl-2-ketobutyrate (HMKB). In the reductase reaction, this 2-ketoacid undergoes a metal-dependent reduction by NADPH to yield (R)-2,3-dihydroxy-isovalerate. The protein is Ketol-acid reductoisomerase (NADP(+)) of Prochlorococcus marinus subsp. pastoris (strain CCMP1986 / NIES-2087 / MED4).